The sequence spans 320 residues: Ribosome biogenesis protein BRX1 homolog 2 (320 aa).

The disordered stretch occupies residues 1-40; sequence MGRKRKHSETEAPAPVKKSDEPAPDRPKRTLLGWKDKSEG. The segment covering 17 to 40 has biased composition (basic and acidic residues); it reads KKSDEPAPDRPKRTLLGWKDKSEG. The 204-residue stretch at 57 to 260 folds into the Brix domain; sequence EKVLVTCSRR…PIKIFAGSFG (204 aa). Residues 297–320 are disordered; sequence RKKMHELSNPLEPDEFADMWKDDE. The segment covering 308–320 has biased composition (acidic residues); sequence EPDEFADMWKDDE.

Belongs to the BRX1 family. In terms of tissue distribution, expressed in roots, rosette leaves, stems, flowers, siliques and seeds.

Its subcellular location is the nucleus. It is found in the nucleolus. In terms of biological role, involved in pre-rRNA processing and required for biogenesis of the large (60S) ribosomal subunit. Required for proper development. This is Ribosome biogenesis protein BRX1 homolog 2 from Arabidopsis thaliana (Mouse-ear cress).